A 390-amino-acid chain; its full sequence is Heat stress transcription factor B-2b (390 aa).

The tract at residues 165–212 is disordered; that stretch reads TRDGSPVLSGEEQVISSSSSPEPPLVLPQAPSGSGSGGVASGDVGDEN. Residues 206–237 adopt a coiled-coil conformation; it reads GDVGDENERLRRENAQLARELSQMRKLCNNIL. The hydrophobic repeat HR-A/B stretch occupies residues 215-244; it reads LRRENAQLARELSQMRKLCNNILLLMSKYA. The Nuclear localization signal motif lies at 318–322; sequence RKRMR. The tract at residues 322-363 is disordered; the sequence is RHDGGGDDDHAATVKAEPMDGRPHGKDEQSAETQAWPIYRPR. The segment covering 323 to 350 has biased composition (basic and acidic residues); it reads HDGGGDDDHAATVKAEPMDGRPHGKDEQ.

It belongs to the HSF family. Class B subfamily. Homotrimer. Post-translationally, exhibits temperature-dependent phosphorylation.

It is found in the nucleus. In terms of biological role, transcriptional regulator that specifically binds DNA of heat shock promoter elements (HSE). In Oryza sativa subsp. japonica (Rice), this protein is Heat stress transcription factor B-2b (HSFB2B).